The sequence spans 336 residues: Type II methyltransferase M.PvuII (336 aa).

2 consecutive repeat copies span residues 11 to 113 and 181 to 293. The segment at 196 to 215 is disordered; the sequence is TPKTRPSGHDIGKSFSKDNG. Over residues 202-211 the composition is skewed to basic and acidic residues; that stretch reads SGHDIGKSFS.

The protein belongs to the N(4)/N(6)-methyltransferase family. N(4) subfamily. Monomer.

It carries out the reaction a 2'-deoxycytidine in DNA + S-adenosyl-L-methionine = an N(4)-methyl-2'-deoxycytidine in DNA + S-adenosyl-L-homocysteine + H(+). Its function is as follows. A beta subtype methylase, recognizes the double-stranded sequence 5'-CAGCTG-3', methylates C-4 on both strands, and protects the DNA from cleavage by the PvuII endonuclease. The sequence is that of Type II methyltransferase M.PvuII from Proteus hauseri.